Reading from the N-terminus, the 118-residue chain is NAD(P)H-quinone oxidoreductase subunit M (118 aa).

The protein belongs to the complex I NdhM subunit family. In terms of assembly, NDH-1 can be composed of about 15 different subunits; different subcomplexes with different compositions have been identified which probably have different functions.

The protein resides in the cellular thylakoid membrane. It carries out the reaction a plastoquinone + NADH + (n+1) H(+)(in) = a plastoquinol + NAD(+) + n H(+)(out). The enzyme catalyses a plastoquinone + NADPH + (n+1) H(+)(in) = a plastoquinol + NADP(+) + n H(+)(out). NDH-1 shuttles electrons from an unknown electron donor, via FMN and iron-sulfur (Fe-S) centers, to quinones in the respiratory and/or the photosynthetic chain. The immediate electron acceptor for the enzyme in this species is believed to be plastoquinone. Couples the redox reaction to proton translocation, and thus conserves the redox energy in a proton gradient. Cyanobacterial NDH-1 also plays a role in inorganic carbon-concentration. The sequence is that of NAD(P)H-quinone oxidoreductase subunit M from Trichormus variabilis (strain ATCC 29413 / PCC 7937) (Anabaena variabilis).